Reading from the N-terminus, the 227-residue chain is uncharacterized protein (227 aa).

ATP is bound at residue 17-24 (GKTGCGKT).

This is an uncharacterized protein from Methanocaldococcus jannaschii (strain ATCC 43067 / DSM 2661 / JAL-1 / JCM 10045 / NBRC 100440) (Methanococcus jannaschii).